Here is a 759-residue protein sequence, read N- to C-terminus: LIM domain and actin-binding protein 1 (759 aa).

M1 is modified (N-acetylmethionine). A phosphoserine mark is found at S4, S15, and S55. Positions 78 to 131 (NPGLGAESHTDSLRNSSTEIRHRADHPPAEVTSHAASGAKADQEEQIHPRSRLR) are disordered. The segment covering 96 to 105 (EIRHRADHPP) has biased composition (basic and acidic residues). A Phosphoserine modification is found at S132. Positions 146–177 (KDGEDLKDHSTESKKMENCLGESRHEVEKSEI) are enriched in basic and acidic residues. A disordered region spans residues 146–182 (KDGEDLKDHSTESKKMENCLGESRHEVEKSEISENTD). Residues 164 to 166 (CLG) carry the Required for interaction with NPC1L1 motif. Phosphoserine is present on residues A183 and S225. Disordered regions lie at residues 211–264 (ILRA…RLSE) and 323–381 (EKIS…AMKK). A Phosphotyrosine modification is found at Y229. S230 and S242 each carry phosphoserine. A compositionally biased stretch (basic and acidic residues) spans 247–258 (DSEKNESRRNLE). S263, S343, S350, S362, S365, S369, and S374 each carry phosphoserine. The span at 362-376 (SPDSRASSLSESSPP) shows a compositional bias: low complexity. The 61-residue stretch at 388–448 (ETCVECQKTV…KPHFNQLFKS (61 aa)) folds into the LIM zinc-binding domain. K439 is subject to N6-succinyllysine. S490 carries the phosphoserine modification. The tract at residues 493 to 513 (VEDAPIAKVGVLAASMEAKAS) is required for interaction with MYO5B. Residues 509 to 709 (EAKASSQQEK…QEPKSLNWSS (201 aa)) are disordered. Basic and acidic residues-rich tracts occupy residues 516-527 (QEKEDKPAETKK) and 556-567 (WPPEDEISKPEV). Over residues 595–607 (ASFQSTSVKSPKT) the composition is skewed to polar residues. 4 positions are modified to phosphoserine: S601, S604, S609, and S617. A compositionally biased stretch (polar residues) spans 644 to 655 (KNGNVGKTTWQN). The span at 656-673 (KESKGETGKRSKEGHSLE) shows a compositional bias: basic and acidic residues. Residues 674-691 (MENENLVENGADSDEDDN) are compositionally biased toward acidic residues. S686, S692, S698, S726, and S741 each carry phosphoserine. A compositionally biased stretch (polar residues) spans 693 to 709 (FLKQQSPQEPKSLNWSS).

In terms of assembly, interacts with NPC1L1; bridges NPC1L1 with MYO5B. Interacts with MYO5B; bridges NPC1L1 with MYO5B. Interacts with PXN; this complex stabilizes actin dynamics. Interacts with F-actin and G-actin. Interacts with LUZP1 (via C-terminus); both proteins restrict ciliation and may work together to regulate this process. Binds RAB40B (GTP-bound); interaction influences LIMA1 subcellular localization in lamellipodia during cell migration. In terms of processing, ubiquitinated by the ECS(RAB40B) complex leading to its degradation. Post-translationally, phosphorylation of the C-terminal region by MAPK1/MAPK3 reduces its association with F-actin and contributes to actin filament reorganization and enhances cell motility. As to expression, highly expressed in placenta, kidney, pancreas, prostate, ovary, spleen and heart. Also detected in lung, liver, brain, skeletal muscle, thymus, testis and intestine. Not detected in leukocytes. Isoform Beta expressed generally at very low levels. Isoform Alpha abundant in epithelial cells from mammary gland, prostate and in normal oral keratinocytes. Low levels in aortic endothelial cells and dermal fibroblasts. Not detectable in myocardium.

The protein localises to the cytoplasm. It is found in the cell junction. The protein resides in the focal adhesion. It localises to the cytoskeleton. Its subcellular location is the stress fiber. The protein localises to the cell membrane. It is found in the cell projection. The protein resides in the ruffle. It localises to the lamellipodium. In terms of biological role, actin-binding protein involved in actin cytoskeleton regulation and dynamics. Increases the number and size of actin stress fibers and inhibits membrane ruffling. Inhibits actin filament depolymerization. Bundles actin filaments, delays filament nucleation and reduces formation of branched filaments. Acts as a negative regulator of primary cilium formation. Plays a role in cholesterol homeostasis. Influences plasma cholesterol levels through regulation of intestinal cholesterol absorption. May act as a scaffold protein by regulating NPC1L1 transportation, an essential protein for cholesterol absorption, to the plasma membrane by recruiting MYO5B to NPC1L1, and thus facilitates cholesterol uptake. The chain is LIM domain and actin-binding protein 1 from Homo sapiens (Human).